A 500-amino-acid chain; its full sequence is L-arabinose isomerase (500 aa).

Positions 306, 333, 350, and 450 each coordinate Mn(2+).

This sequence belongs to the arabinose isomerase family. As to quaternary structure, homohexamer. Requires Mn(2+) as cofactor.

It carries out the reaction beta-L-arabinopyranose = L-ribulose. Its pathway is carbohydrate degradation; L-arabinose degradation via L-ribulose; D-xylulose 5-phosphate from L-arabinose (bacterial route): step 1/3. Catalyzes the conversion of L-arabinose to L-ribulose. The protein is L-arabinose isomerase of Shigella dysenteriae serotype 1 (strain Sd197).